We begin with the raw amino-acid sequence, 231 residues long: 26S proteasome non-ATPase regulatory subunit 10 (231 aa).

ANK repeat units follow at residues 3–36 (GCVS…ATRT), 37–69 (DQDS…VNEK), 70–102 (DDAG…VNAV), 103–135 (NQNG…PDAK), 136–168 (NHYD…TNIQ), 169–201 (DTEG…IYIE), and 202–226 (NKEE…IAES).

Part of transient complex containing PSMD10, PSMC4, PSMC5 and PAAF1 formed during the assembly of the 26S proteasome. Stays associated throughout the assembly of the PA700/19S RC and is released upon association with the 20S core. Interacts with PSMC4. Interacts with RB1. Interacts with CDK4. Interacts with MDM2. Interacts with RELA. Associates with a CDK4:CCND2 serine/threonine kinase complex. Interacts with ARHGDIA and increases the interaction between ARHGDIA and RHOA, hence promotes ARHGDIA inactivation of RHOA and ROCK.

The protein localises to the cytoplasm. Its subcellular location is the nucleus. Acts as a chaperone during the assembly of the 26S proteasome, specifically of the PA700/19S regulatory complex (RC). In the initial step of the base subcomplex assembly is part of an intermediate PSMD10:PSMC4:PSMC5:PAAF1 module which probably assembles with a PSMD5:PSMC2:PSMC1:PSMD2 module. Independently of the proteasome, regulates EGF-induced AKT activation through inhibition of the RHOA/ROCK/PTEN pathway, leading to prolonged AKT activation. Plays an important role in RAS-induced tumorigenesis. In terms of biological role, acts as an oncoprotein by being involved in negative regulation of tumor suppressors RB1 and p53/TP53. Overexpression is leading to phosphorylation of RB1 and proteasomal degradation of RB1. Regulates CDK4-mediated phosphorylation of RB1 by competing with CDKN2A for binding with CDK4. Facilitates binding of MDM2 to p53/TP53 and the mono- and polyubiquitination of p53/TP53 by MDM2 suggesting a function in targeting the TP53:MDM2 complex to the 26S proteasome. Involved in p53-independent apoptosis. Involved in regulation of NF-kappa-B by retaining it in the cytoplasm. Binds to the NF-kappa-B component RELA and accelerates its XPO1/CRM1-mediated nuclear export. The polypeptide is 26S proteasome non-ATPase regulatory subunit 10 (Psmd10) (Rattus norvegicus (Rat)).